Consider the following 942-residue polypeptide: Homeobox protein 2 (942 aa).

Composition is skewed to low complexity over residues 32–87 and 98–130; these read ECNE…NINE and SPYSSPSSSISSPSRSPSPNSPASSSPIHSPIP. Disordered stretches follow at residues 32–149, 161–494, 537–580, and 609–942; these read ECNE…PQNI, LESP…RLKK, RQEK…QGGA, and FKNN…CQQN. Positions 131 to 149 are enriched in polar residues; sequence NTNFKQSGEYQSIPSPQNI. Positions 163-261 are enriched in low complexity; sequence SPNSSNSSPS…PSSNLSKSNS (99 aa). Positions 269-290 are enriched in polar residues; it reads QAPSNTSSPQLLSPNHNQQRIS. 2 stretches are compositionally biased toward low complexity: residues 299 to 430 and 450 to 464; these read NNNH…NSSP and NNNNNNNNNNNSNSS. Positions 465-481 are enriched in polar residues; sequence FDEYQPQQKVSRSNSPN. Residues 485 to 544 constitute a DNA-binding region (homeobox); it reads EKKRRTRLKKEQADILKTFFDNDDYPTKDDKETLANRLGMSYCAVTTWFSNKRQEKKRRG. Composition is skewed to low complexity over residues 609 to 621, 628 to 685, 694 to 737, 752 to 764, 776 to 864, and 890 to 927; these read FKNNNMDNNNKNV, NNNN…GSSD, NNNN…NNNN, NNNNNNNNNNNNN, SDDT…YLNN, and NNFNGDNNNNNNNKNNNNNNQNNNGNGNNNNNNNNDNN. A coiled-coil region spans residues 835–865; sequence NNNNNNNNQNNNNNNNNNQYNNNNKNYLNNI.

It is found in the nucleus. Putative transcription factor that may potentiate the function of warA. The protein is Homeobox protein 2 (hbx2) of Dictyostelium discoideum (Social amoeba).